A 306-amino-acid polypeptide reads, in one-letter code: MTNPLYKKHVISISDLTRPDMELVVATAQRLKAEPDTRLLKDKLIASCFFEASTRTRLSFETAVQRLGGNIIGFADGGNTSAKKGETLADSIKIIGSYSDAVVMRHPKEGAARLASEFSRVPVINGGDGSNQHPTQTLLDLFSIHETQGKLDGLNVAFVGDLKYGRTVHSLAQALSLFNCRFFFISPDALAMPDYICEELEEKGIRFSVHETMEEVMPELDILYMTRVQKERFDETEYKHMAAKFVLELATLEGAKPTMKILHPLPRVDEIDVAVDKTPYAYYFQQAENGVYARQALLALVLNETV.

Carbamoyl phosphate contacts are provided by R55 and T56. L-aspartate is bound at residue K84. Carbamoyl phosphate is bound by residues R105, H133, and Q136. R166 and R227 together coordinate L-aspartate. Carbamoyl phosphate-binding residues include L265 and P266.

Belongs to the aspartate/ornithine carbamoyltransferase superfamily. ATCase family. In terms of assembly, heterododecamer (2C3:3R2) of six catalytic PyrB chains organized as two trimers (C3), and six regulatory PyrI chains organized as three dimers (R2).

It catalyses the reaction carbamoyl phosphate + L-aspartate = N-carbamoyl-L-aspartate + phosphate + H(+). Its pathway is pyrimidine metabolism; UMP biosynthesis via de novo pathway; (S)-dihydroorotate from bicarbonate: step 2/3. Catalyzes the condensation of carbamoyl phosphate and aspartate to form carbamoyl aspartate and inorganic phosphate, the committed step in the de novo pyrimidine nucleotide biosynthesis pathway. In Aeromonas salmonicida (strain A449), this protein is Aspartate carbamoyltransferase catalytic subunit.